A 550-amino-acid chain; its full sequence is Dipeptide-binding protein (550 aa).

Positions 1–22 are cleaved as a signal peptide; the sequence is MKQAKIIGLSTVIALSGIILVA. Cysteine 23 carries the N-palmitoyl cysteine lipid modification. Cysteine 23 carries S-diacylglycerol cysteine lipidation.

It belongs to the bacterial solute-binding protein 5 family. As to quaternary structure, the complex is composed of two ATP-binding proteins (DppD and DppF), two transmembrane proteins (DppB and DppC) and a solute-binding protein (DppA).

It is found in the cell membrane. In terms of biological role, part of the ABC transporter DppABCDF involved in dipeptide transport. Binds di- and tripeptides with high affinity. Requires a free N-terminal alpha-amino group and an alpha-peptide bound contiguous with the N-terminal amino group, has a strong selectivity for L-residues, and shows preference for dipeptides containing methionine or arginine, followed by hydrophobic tripeptides consisting of leucine or valine residues. This chain is Dipeptide-binding protein, found in Lactococcus lactis subsp. cremoris (strain MG1363).